The primary structure comprises 156 residues: Small ribosomal subunit protein uS7c (156 aa).

The protein belongs to the universal ribosomal protein uS7 family. Part of the 30S ribosomal subunit.

The protein localises to the plastid. The protein resides in the chloroplast. One of the primary rRNA binding proteins, it binds directly to 16S rRNA where it nucleates assembly of the head domain of the 30S subunit. This is Small ribosomal subunit protein uS7c (rps7) from Cycas revoluta (Sago palm).